A 442-amino-acid polypeptide reads, in one-letter code: Elongation factor 1-gamma (442 aa).

The GST N-terminal domain maps to 2–87 (AAGTLYTYPE…FLSNDALRGS (86 aa)). The 129-residue stretch at 88–216 (TPQASAQVLQ…VKLCEKMAQF (129 aa)) folds into the GST C-terminal domain. Basic and acidic residues-rich tracts occupy residues 224-242 (MQPK…KEGG) and 249-263 (QEKK…KAAP). Residues 224–273 (MQPKKEAPAKKEKAGKEGGKQQQPQQEKKEKKKEEKKAAPAEEEMDECEA) are disordered. The EF-1-gamma C-terminal domain occupies 281–442 (AKDPYAHLPK…KSFNQGKIFK (162 aa)).

EF-1 is composed of four subunits: alpha, beta, delta, and gamma.

Functionally, probably plays a role in anchoring the complex to other cellular components. In Carassius auratus (Goldfish), this protein is Elongation factor 1-gamma (eef1g).